The sequence spans 197 residues: Probable molybdenum cofactor guanylyltransferase (197 aa).

GTP contacts are provided by residues 9-11, K21, D65, and D94; that span reads LAG. D94 contacts Mg(2+).

It belongs to the MobA family. Mg(2+) serves as cofactor.

Its subcellular location is the cytoplasm. It carries out the reaction Mo-molybdopterin + GTP + H(+) = Mo-molybdopterin guanine dinucleotide + diphosphate. Functionally, transfers a GMP moiety from GTP to Mo-molybdopterin (Mo-MPT) cofactor (Moco or molybdenum cofactor) to form Mo-molybdopterin guanine dinucleotide (Mo-MGD) cofactor. The protein is Probable molybdenum cofactor guanylyltransferase of Carboxydothermus hydrogenoformans (strain ATCC BAA-161 / DSM 6008 / Z-2901).